The following is a 161-amino-acid chain: Cyclic pyranopterin monophosphate synthase (161 aa).

Residues 75–77 (LCH) and 113–114 (ME) each bind substrate. Residue Asp-128 is part of the active site.

This sequence belongs to the MoaC family. As to quaternary structure, homohexamer; trimer of dimers.

It catalyses the reaction (8S)-3',8-cyclo-7,8-dihydroguanosine 5'-triphosphate = cyclic pyranopterin phosphate + diphosphate. It functions in the pathway cofactor biosynthesis; molybdopterin biosynthesis. Functionally, catalyzes the conversion of (8S)-3',8-cyclo-7,8-dihydroguanosine 5'-triphosphate to cyclic pyranopterin monophosphate (cPMP). This Salmonella arizonae (strain ATCC BAA-731 / CDC346-86 / RSK2980) protein is Cyclic pyranopterin monophosphate synthase.